The following is a 538-amino-acid chain: NAD(P)H-quinone oxidoreductase chain 4 1 (538 aa).

13 helical membrane passes run 7-27 (FPWLTAIIALPLVAALAIPII), 37-57 (WYGLGVAFADFALMIAAFWHY), 88-108 (LSMPLLLLTGLINTLAIFAAW), 116-136 (LFYGLMLVMYSAQLGVFVAQD), 137-157 (LLLFFLMWEIELVPVYLLISI), 170-190 (FILYTAAASIFILVAGFALAF), 210-230 (AIELLAYAGFLIAFGVKLPIF), 244-264 (SAPGSMILAGVLLKMGGYALI), 278-298 (FAPVLAILGVVNIVYGACCAF), 315-335 (MGFVLIGLASYTEIGVSGAVL), 336-356 (QMVSHGLVAASLFFLTGVTYE), 388-408 (LALPGMSGFVGELMVFIGIAT), and 418-438 (VVVVLLSAVGVILTPIYLLSM).

The protein belongs to the complex I subunit 4 family.

It is found in the cellular thylakoid membrane. It catalyses the reaction a plastoquinone + NADH + (n+1) H(+)(in) = a plastoquinol + NAD(+) + n H(+)(out). The catalysed reaction is a plastoquinone + NADPH + (n+1) H(+)(in) = a plastoquinol + NADP(+) + n H(+)(out). Functionally, NDH-1 shuttles electrons from NAD(P)H, via FMN and iron-sulfur (Fe-S) centers, to quinones in the respiratory chain. The immediate electron acceptor for the enzyme in this species is believed to be plastoquinone. Couples the redox reaction to proton translocation (for every two electrons transferred, four hydrogen ions are translocated across the cytoplasmic membrane), and thus conserves the redox energy in a proton gradient. The sequence is that of NAD(P)H-quinone oxidoreductase chain 4 1 from Nostoc sp. (strain PCC 7120 / SAG 25.82 / UTEX 2576).